The following is a 476-amino-acid chain: FAD-dependent monooxygenase ausM (476 aa).

Residues glutamate 41, glycine 55, and arginine 114 each coordinate FAD. The active site involves tyrosine 222. FAD contacts are provided by aspartate 314 and alanine 327. Residues 447–467 (LGSTPIHMLTLLLPCLFYFMY) form a helical membrane-spanning segment.

It belongs to the paxM FAD-dependent monooxygenase family. Requires FAD as cofactor.

It is found in the membrane. The protein operates within secondary metabolite biosynthesis; terpenoid biosynthesis. In terms of biological role, FAD-dependent monooxygenase; part of the gene cluster A that mediates the biosynthesis of the fungal meroterpenoid acetoxydehydroaustin. The first step of the pathway is the synthesis of 3,5-dimethylorsellinic acid by the polyketide synthase ausA. 3,5-dimethylorsellinic acid is then prenylated by the polyprenyl transferase ausN. Further epoxidation by the FAD-dependent monooxygenase ausM and cyclization by the probable terpene cyclase ausL lead to the formation of protoaustinoid A. Protoaustinoid A is then oxidized to spiro-lactone preaustinoid A3 by the combined action of the FAD-binding monooxygenases ausB and ausC, and the dioxygenase ausE. Acid-catalyzed keto-rearrangement and ring contraction of the tetraketide portion of preaustinoid A3 by ausJ lead to the formation of preaustinoid A4. The aldo-keto reductase ausK, with the help of ausH, is involved in the next step by transforming preaustinoid A4 into isoaustinone which is in turn hydroxylated by the P450 monooxygenase ausI to form austinolide. The cytochrome P450 monooxygenase ausG then modifies austinolide to austinol. Austinol is further acetylated to austin by the O-acetyltransferase ausP, which spontaneously changes to dehydroaustin. The cytochrome P450 monooxygenase then converts dehydroaustin is into 7-dehydrodehydroaustin. The hydroxylation catalyzed by ausR permits the second O-acetyltransferase ausQ to add an additional acetyl group to the molecule, leading to the formation of acetoxydehydroaustin. Due to genetic rearrangements of the clusters and the subsequent loss of some enzymes, the end product of the Penicillium brasilianum austinoid biosynthesis clusters is acetoxydehydroaustin. In Penicillium brasilianum, this protein is FAD-dependent monooxygenase ausM.